The sequence spans 914 residues: Solute carrier family 12 member 9 (914 aa).

At 1 to 36 (MASESSPLLAYRLLGEEGAAFPPNGAGVSGVPSSRK) the chain is on the cytoplasmic side. Residue Ser-6 is modified to Phosphoserine. The chain crosses the membrane as a helical span at residues 37–57 (LSTFLGVVVPTVLSMFSIVVF). Topologically, residues 58 to 72 (LRIGFVVGHAGLLQA) are extracellular. The chain crosses the membrane as a helical span at residues 73–93 (LAMLLVAYIILALTVLSVCAI). Topologically, residues 94 to 119 (ATNGAVRGGGAYFMISRTLGPEVGGS) are cytoplasmic. Residues 120–140 (IGLMFYLANVCGCAVSLLGLV) form a helical membrane-spanning segment. Residues 141–167 (ESILDVFGADATGSSGIQVLPQGYGWN) lie on the Extracellular side of the membrane. Residues 168-188 (LLYGSLLLGLVGGVCTLGAGL) form a helical membrane-spanning segment. The Cytoplasmic segment spans residues 189-193 (YARAS). Residues 194 to 214 (FLTFLLVSGSLASVLVSFVAV) traverse the membrane as a helical segment. The Extracellular segment spans residues 215–262 (GPRNIPLAPRPGTNASSVPHRHGHFTGFNGSTLRDNLGAGYAEDYTTG). Asn-228 and Asn-243 each carry an N-linked (GlcNAc...) asparagine glycan. The chain crosses the membrane as a helical span at residues 263–283 (AMMTFASVFAVLFNGCTGIMA). Residues 284-297 (GANMSGELKDPSRA) lie on the Cytoplasmic side of the membrane. The helical transmembrane segment at 298–318 (IPLGTIIAVAYTFFIYILLFF) threads the bilayer. Over 319 to 338 (LSSFTCDRALLQEDYGFFRD) the chain is Extracellular. Residues 339-359 (ISLWPPLVLIGIYATALSASM) form a helical membrane-spanning segment. Topologically, residues 360–376 (SSLIGASRILHALAQDD) are cytoplasmic. A helical transmembrane segment spans residues 377–399 (LFGVILAPAKVVSGGGNPWGAVL). The Extracellular portion of the chain corresponds to 400 to 416 (YSWGLVQLVLLAGKLNT). Residues 417–437 (LAAVVTVFYLVAYAAVDLSCL) form a helical membrane-spanning segment. The Cytoplasmic portion of the chain corresponds to 438 to 466 (SLEWASAPNFRPTFSLFSWHTCLLGVASC). The helical transmembrane segment at 467–487 (LLMMFLISPGAAGGSLLLMGL) threads the bilayer. Residues 488–740 (LSALLTARGG…LLRPRGGPGY (253 aa)) are Extracellular-facing. The interval 645-678 (PAFSEPAEGTREGGSPALSTLFPPPRAPGSPRAL) is disordered. Residues 741–761 (VDVCGLFLLQMATILSMVPAW) traverse the membrane as a helical segment. At 762–914 (HSARLRIFLC…GVTPVTCTDL (153 aa)) the chain is on the cytoplasmic side. A disordered region spans residues 844–864 (QGRGTVGGPGGPEGRDGEEGP).

Belongs to the SLC12A transporter family. In terms of assembly, interacts with SLC12A1.

The protein resides in the cell membrane. The protein localises to the lysosome membrane. May be an inhibitor of SLC12A1. Seems to correspond to a subunit of a multimeric transport system and thus, additional subunits may be required for its function. May play a role in lysosomal ion flux and osmoregulation. This is Solute carrier family 12 member 9 (Slc12a9) from Mus musculus (Mouse).